The following is a 312-amino-acid chain: L-lactate dehydrogenase (312 aa).

Val14, Asp35, and Tyr66 together coordinate NAD(+). The substrate site is built by Gln83 and Arg90. Residues Ser103, Ala120–Asn122, and Ser145 each bind NAD(+). Asn122 to Asp125 lines the substrate pocket. Asp150–Arg153 serves as a coordination point for substrate. The active-site Proton acceptor is the His177. Tyr220 is modified (phosphotyrosine). Position 229 (Thr229) interacts with substrate.

It belongs to the LDH/MDH superfamily. LDH family. As to quaternary structure, homotetramer.

It localises to the cytoplasm. It catalyses the reaction (S)-lactate + NAD(+) = pyruvate + NADH + H(+). It functions in the pathway fermentation; pyruvate fermentation to lactate; (S)-lactate from pyruvate: step 1/1. Its function is as follows. Catalyzes the conversion of lactate to pyruvate. This is L-lactate dehydrogenase from Mycoplasma genitalium (strain ATCC 33530 / DSM 19775 / NCTC 10195 / G37) (Mycoplasmoides genitalium).